The primary structure comprises 84 residues: Conotoxin Am6.1 (84 aa).

An N-terminal signal peptide occupies residues 1–19 (MEKLTILLLVAAVLMSTHA). The propeptide occupies 20 to 47 (MFQGGGEKSRKAINFSETRKLARNKQKR). 3 cysteine pairs are disulfide-bonded: C48–C62, C55–C66, and C61–C71. A 6'-bromotryptophan; in Am6.1b modification is found at W51. Residues E60 and E64 each carry the 4-carboxyglutamate; partial; in Am6.1b and Am6.1c modification. Residues 78–84 (RTTSHPI) constitute a propeptide that is removed on maturation.

The protein belongs to the conotoxin O2 family. Post-translationally, three forms of this peptides have been described. The unmodified Am6.1a (Am3286) is not detected in the venom; Am6.1b (Am3408) is only Trp brominated, while Am6.1c (Am3452) is both Trp brominated and Glu gamma-carboxyglutamated. Both Am6.1b and Am6.1c are detected in the venom. In terms of tissue distribution, expressed by the venom duct.

The protein resides in the secreted. Gamma-conotoxins may act on voltage-gated non-specific cation pacemaker channels (HCN). In Conus amadis (Amadis cone), this protein is Conotoxin Am6.1.